The sequence spans 437 residues: MNDENYSTTIYNRVQTERVYEDSDPAENGGPLYDEVHEDVRREDNLYVNELENQEYDSVAVYPVGRQGRTSASLQPETGEYVLPDEPYSKAQDPHPGEPTADEDISLEELLSPTKDHQSDSEEPQASDPEEPQASDPEEPQGPDPEEPQENGNEMEADLPSPSSFTIQNSRAFSTREISPTSYSADDVSEGNESASASPEINLFVKAGIDGESIGNCPFSQRLFMILWLKGVVFNVTTVDLKRKPADLHNLAPGTHPPFLTFNGDVKTDVNKIEEFLEETLTPEKYPRLAAKHRESNTAGIDIFVKFSAYIKNTKQQSNAALERGLTKALKKLDDYLNTPLPEEIDADTRGDDEKGSRRKFLDGDELTLADCNLLPKLHVVKIVAKKYRNYDFPAEMTGLWRYLKNAYARDEFTNTCAADSEIELAYADVAKRLSRS.

Residues 1–14 (MNDENYSTTIYNRV) show a composition bias toward polar residues. The disordered stretch occupies residues 1 to 197 (MNDENYSTTI…VSEGNESASA (197 aa)). Residues 34–45 (DEVHEDVRREDN) show a composition bias toward basic and acidic residues. Tandem repeats lie at residues 118-125 (QSDSEEPQ), 126-133 (ASDPEEPQ), 134-141 (ASDPEEPQ), and 142-149 (GPDPEEPQ). The segment at 118-149 (QSDSEEPQASDPEEPQASDPEEPQGPDPEEPQ) is 4 X 8 AA tandem repeats of [AGQ]-[SP]-D-[PS]-E-E-P-Q. Positions 121–157 (SEEPQASDPEEPQASDPEEPQGPDPEEPQENGNEMEA) are enriched in acidic residues. The span at 161-184 (SPSSFTIQNSRAFSTREISPTSYS) shows a compositional bias: polar residues. Residues 217–220 (CPFS) carry the G-site motif. The chain crosses the membrane as a helical span at residues 219-239 (FSQRLFMILWLKGVVFNVTTV). Residues 263-427 (NGDVKTDVNK…AADSEIELAY (165 aa)) enclose the GST C-terminal domain.

It belongs to the chloride channel CLIC family. In terms of assembly, component of a multimeric complex consisting of several cytoskeletal proteins, including actin, ezrin, alpha-actinin, gelsolin, and IQGAP1. Interacts with AKAP9. Interacts with TPRN. TPRN, CLIC5 and PTPQR form concentric rings at the base of stereocilia and may form a complex. Interacts with EZR, MYO6 and RDX; the proteins may work together as a complex to stabilize linkages between the plasma membrane and subjacent actin cytoskeleton at the stereocilium base. In terms of processing, phosphorylated. Expressed in most tissues. Higher levels found in kidney, heart, skeletal muscle, T84 and PANC-1 cells.

It localises to the golgi apparatus. It is found in the cytoplasm. The protein resides in the cytoskeleton. The protein localises to the microtubule organizing center. Its subcellular location is the centrosome. It localises to the cell cortex. It is found in the membrane. The protein resides in the apical cell membrane. The protein localises to the mitochondrion. Its subcellular location is the cell projection. It localises to the stereocilium. The enzyme catalyses Na(+)(in) = Na(+)(out). It catalyses the reaction K(+)(in) = K(+)(out). The catalysed reaction is chloride(in) = chloride(out). Inhibited by F-actin. In terms of biological role, in the soluble state, catalyzes glutaredoxin-like thiol disulfide exchange reactions with reduced glutathione as electron donor. Can insert into membranes and form non-selective ion channels almost equally permeable to Na(+), K(+) and Cl(-). Required for normal hearing. It is necessary for the formation of stereocilia in the inner ear and normal development of the organ of Corti. May play a role in the regulation of transepithelial ion absorption and secretion. Is required for the development and/or maintenance of the proper glomerular endothelial cell and podocyte architecture. Plays a role in formation of the lens suture in the eye, which is important for normal optical properties of the lens. The polypeptide is Chloride intracellular channel protein 5 (CLIC5) (Bos taurus (Bovine)).